A 1054-amino-acid polypeptide reads, in one-letter code: NACHT, LRR and PYD domains-containing protein 12 (1054 aa).

The Pyrin domain maps to Met1–Val95. Positions Tyr129–Glu201 constitute an FISNA domain. Residues His211–Leu528 enclose the NACHT domain. Residue Gly217–Ser224 coordinates ATP. LRR repeat units follow at residues Tyr821 to Cys841, Arg850 to Ser871, Ser878 to Glu899, Lys907 to Ser928, Cys935 to Gly955, Arg964 to Ser985, Thr992 to Lys1013, and Lys1021 to Ala1042.

The protein belongs to the NLRP family. As to quaternary structure, interacts (via pyrin domain) with ASC. Interacts (via pyrin domain) with FAF1 (via UBA domain). Interacts with MAP3K14; this interaction promotes proteasomal degradation of MAP3K14. Interacts with NOD2; this interaction promotes degradation of NOD2 through the ubiquitin-proteasome pathway. Interacts with HSPA1A and HSPA8. Interacts with HSP90AA1. Interacts with TRIM25; this interaction inhibits RIGI-mediated signaling pathway. Mainly expressed in dendritic cells (DCs) and neutrophils.

Its subcellular location is the cytoplasm. Functionally, plays an essential role as an potent mitigator of inflammation. Primarily expressed in dendritic cells and macrophages, inhibits both canonical and non-canonical NF-kappa-B and ERK activation pathways. Functions as a negative regulator of NOD2 by targeting it to degradation via the proteasome pathway. In turn, promotes bacterial tolerance. Also inhibits the RIGI-mediated immune signaling against RNA viruses by reducing the E3 ubiquitin ligase TRIM25-mediated 'Lys-63'-linked RIGI activation but enhancing the E3 ubiquitin ligase RNF125-mediated 'Lys-48'-linked RIGI degradation. Also acts as a negative regulator of inflammatory response to mitigate obesity and obesity-associated diseases in adipose tissue. The protein is NACHT, LRR and PYD domains-containing protein 12 (Nlrp12) of Mus musculus (Mouse).